A 1053-amino-acid chain; its full sequence is MKRNYILGLDIGITSVGYGIIDYETRDVIDAGVRLFKEANVENNEGRRSKRGARRLKRRRRHRIQRVKKLLFDYNLLTDHSELSGINPYEARVKGLSQKLSEEEFSAALLHLAKRRGVHNVNEVEEDTGNELSTKEQISRNSKALEEKYVAELQLERLKKDGEVRGSINRFKTSDYVKEAKQLLKVQKAYHQLDQSFIDTYIDLLETRRTYYEGPGEGSPFGWKDIKEWYEMLMGHCTYFPEELRSVKYAYNADLYNALNDLNNLVITRDENEKLEYYEKFQIIENVFKQKKKPTLKQIAKEILVNEEDIKGYRVTSTGKPEFTNLKVYHDIKDITARKEIIENAELLDQIAKILTIYQSSEDIQEELTNLNSELTQEEIEQISNLKGYTGTHNLSLKAINLILDELWHTNDNQIAIFNRLKLVPKKVDLSQQKEIPTTLVDDFILSPVVKRSFIQSIKVINAIIKKYGLPNDIIIELAREKNSKDAQKMINEMQKRNRQTNERIEEIIRTTGKENAKYLIEKIKLHDMQEGKCLYSLEAIPLEDLLNNPFNYEVDHIIPRSVSFDNSFNNKVLVKQEENSKKGNRTPFQYLSSSDSKISYETFKKHILNLAKGKGRISKTKKEYLLEERDINRFSVQKDFINRNLVDTRYATRGLMNLLRSYFRVNNLDVKVKSINGGFTSFLRRKWKFKKERNKGYKHHAEDALIIANADFIFKEWKKLDKAKKVMENQMFEEKQAESMPEIETEQEYKEIFITPHQIKHIKDFKDYKYSHRVDKKPNRELINDTLYSTRKDDKGNTLIVNNLNGLYDKDNDKLKKLINKSPEKLLMYHHDPQTYQKLKLIMEQYGDEKNPLYKYYEETGNYLTKYSKKDNGPVIKKIKYYGNKLNAHLDITDDYPNSRNKVVKLSLKPYRFDVYLDNGVYKFVTVKNLDVIKKENYYEVNSKCYEEAKKLKKISNQAEFIASFYNNDLIKINGELYRVIGVNNDLLNRIEVNMIDITYREYLENMNDKRPPRIIKTIASKTQSIKKYSTDILGNLYEVKSKKHPQIIKKG.

Residues 1–41 (MKRNYILGLDIGITSVGYGIIDYETRDVIDAGVRLFKEANV) form a ruvC-I region. The For RuvC-like nuclease domain role is filled by aspartate 10. Aspartate 10 is a Mg(2+) binding site. Positions 41–426 (VENNEGRRSK…IFNRLKLVPK (386 aa)) are recognition lobe. The tract at residues 435 to 481 (EIPTTLVDDFILSPVVKRSFIQSIKVINAIIKKYGLPNDIIIELARE) is ruvC-II. Mg(2+)-binding residues include glutamate 477 and glutamate 481. Residues 480–646 (REKNSKDAQK…VQKDFINRNL (167 aa)) enclose the HNH Cas9-type domain. Histidine 557 (proton acceptor for HNH nuclease domain) is an active-site residue. Positions 650–775 (RYATRGLMNL…FKDYKYSHRV (126 aa)) are ruvC-III. A Mg(2+)-binding site is contributed by histidine 701. Tyrosine 789 contributes to the RNA binding site. PAM substrate-binding stretches follow at residues 882–889 (YYGNKLNA) and 985–993 (NNDLLNRIE). The PAM-interacting domain (PI) stretch occupies residues 910–1053 (KPYRFDVYLD…KKHPQIIKKG (144 aa)).

The protein belongs to the CRISPR-associated Cas9 family. Subtype II-A subfamily. In terms of assembly, monomer. Binds crRNA and tracrRNA. It depends on Mg(2+) as a cofactor.

Functionally, CRISPR (clustered regularly interspaced short palindromic repeat) is an adaptive immune system that provides protection against mobile genetic elements (viruses, transposable elements and conjugative plasmids). CRISPR clusters contain spacers, sequences complementary to antecedent mobile elements, and target invading nucleic acids. CRISPR clusters are transcribed and processed into CRISPR RNA (crRNA). In type II CRISPR systems correct processing of pre-crRNA requires a trans-encoded small RNA (tracrRNA), endogenous ribonuclease 3 (rnc) and this protein. The tracrRNA serves as a guide for ribonuclease 3-aided processing of pre-crRNA. Subsequently Cas9/crRNA/tracrRNA endonucleolytically cleaves linear or circular dsDNA target complementary to the spacer; Cas9 is inactive in the absence of the 2 guide RNAs (gRNA). Cas9 recognizes the protospacer adjacent motif (PAM) in the CRISPR repeat sequences to help distinguish self versus nonself, as targets within the bacterial CRISPR locus do not have PAMs. PAM recognition is also required for catalytic activity. The sequence is that of CRISPR-associated endonuclease Cas9 from Staphylococcus aureus.